The sequence spans 229 residues: ATP synthase subunit a (229 aa).

The next 6 membrane-spanning stretches (helical) occupy residues 25-45 (ADAVVYTWLIMIGLVVLSIAA), 82-102 (FFPLVATLALFILVSNLIGLI), 104-124 (GFFPPTANINTTAACAVVVFV), 142-162 (FLGPIAWLAPMMFFIEVIGHL), 181-201 (LVLIIFFGLAPFVVPLPMMLM), and 202-222 (GVLVSFIQAFVFMLLAMIYIQ).

Belongs to the ATPase A chain family. In terms of assembly, F-type ATPases have 2 components, CF(1) - the catalytic core - and CF(0) - the membrane proton channel. CF(1) has five subunits: alpha(3), beta(3), gamma(1), delta(1), epsilon(1). CF(0) has three main subunits: a(1), b(2) and c(9-12). The alpha and beta chains form an alternating ring which encloses part of the gamma chain. CF(1) is attached to CF(0) by a central stalk formed by the gamma and epsilon chains, while a peripheral stalk is formed by the delta and b chains.

It localises to the cell inner membrane. Functionally, key component of the proton channel; it plays a direct role in the translocation of protons across the membrane. The polypeptide is ATP synthase subunit a (Geobacter sp. (strain M21)).